We begin with the raw amino-acid sequence, 433 residues long: Serine carboxypeptidase-like 11 (433 aa).

A signal peptide spans 1-21; it reads MELTLKLLVLLLFILNHHVGS. Intrachain disulfides connect Cys80–Cys322, Cys243–Cys257, and Cys281–Cys288. An N-linked (GlcNAc...) asparagine glycan is attached at Asn101. The active site involves Ser176. N-linked (GlcNAc...) asparagine glycosylation occurs at Asn342. The active site involves Asp358. Asn374 is a glycosylation site (N-linked (GlcNAc...) asparagine). His411 is an active-site residue.

Belongs to the peptidase S10 family. Ubiquitous.

Its subcellular location is the secreted. Functionally, probable carboxypeptidase. The chain is Serine carboxypeptidase-like 11 (SCPL11) from Arabidopsis thaliana (Mouse-ear cress).